The primary structure comprises 155 residues: Endoribonuclease YbeY (155 aa).

Zn(2+) contacts are provided by His114, His118, and His124.

This sequence belongs to the endoribonuclease YbeY family. Zn(2+) is required as a cofactor.

It localises to the cytoplasm. Functionally, single strand-specific metallo-endoribonuclease involved in late-stage 70S ribosome quality control and in maturation of the 3' terminus of the 16S rRNA. The polypeptide is Endoribonuclease YbeY (Photorhabdus laumondii subsp. laumondii (strain DSM 15139 / CIP 105565 / TT01) (Photorhabdus luminescens subsp. laumondii)).